The primary structure comprises 143 residues: Large ribosomal subunit protein uL11 (143 aa).

Belongs to the universal ribosomal protein uL11 family. Part of the ribosomal stalk of the 50S ribosomal subunit. Interacts with L10 and the large rRNA to form the base of the stalk. L10 forms an elongated spine to which L12 dimers bind in a sequential fashion forming a multimeric L10(L12)X complex. Post-translationally, one or more lysine residues are methylated.

Functionally, forms part of the ribosomal stalk which helps the ribosome interact with GTP-bound translation factors. In Verminephrobacter eiseniae (strain EF01-2), this protein is Large ribosomal subunit protein uL11.